Here is a 125-residue protein sequence, read N- to C-terminus: UPF0389 protein CG9231 (125 aa).

A helical transmembrane segment spans residues 69-88 (IRLANIMIALTAVGCAIMVY). N-linked (GlcNAc...) asparagine glycosylation is present at Asn-112.

Belongs to the UPF0389 family.

The protein localises to the membrane. In Drosophila melanogaster (Fruit fly), this protein is UPF0389 protein CG9231.